Here is a 628-residue protein sequence, read N- to C-terminus: LRR receptor kinase SERK2 (628 aa).

The first 31 residues, 1–31 (MAEARLLRRRRLCLAVPFVWVVAVAVSRVGA), serve as a signal peptide directing secretion. LRR repeat units follow at residues 97–121 (LKNL…LGNL), 123–144 (NLVS…TLGQ), 145–169 (LYKL…LTNI), and 170–194 (TTLQ…SFSL). 6 N-linked (GlcNAc...) asparagine glycosylation sites follow: N109, N120, N133, N155, N168, and N181. Residues 243-263 (AIAGGVAAAAALLFAVPAIGF) form a helical membrane-spanning segment. Position 303 is a phosphothreonine (T303). The Protein kinase domain occupies 306 to 593 (FSNKNILGRG…GLAERWEEWQ (288 aa)). 312–320 (LGRGGFGKV) provides a ligand contact to ATP. Phosphoserine is present on S329. K334 contacts ATP. T350 is modified (phosphothreonine). S356 and S387 each carry phosphoserine. D433 (proton acceptor) is an active-site residue. Phosphothreonine occurs at positions 463, 466, and 472. A Phosphoserine modification is found at S615. A Phosphothreonine modification is found at T616. S625 is modified (phosphoserine).

It belongs to the protein kinase superfamily. Ser/Thr protein kinase family. As to quaternary structure, interacts with BRI1. Interacts with XA21, XA26/XA3 and FLS2. Post-translationally, autophosphorylated on serine and threonine residues. As to expression, expressed in flag leaves. Expressed in roots, shoot apex, leaf blades, leaf sheaths, panicles and flowers. Expressed leaves, stems, sheaths and flowers.

Its subcellular location is the cell membrane. The enzyme catalyses L-seryl-[protein] + ATP = O-phospho-L-seryl-[protein] + ADP + H(+). The catalysed reaction is L-threonyl-[protein] + ATP = O-phospho-L-threonyl-[protein] + ADP + H(+). Functionally, LRR receptor kinase involved in positive regulation of somatic embryogenesis and defense response against the rice blast fungus pathogen Magnaporthe oryzae. Involved in the positive regulation of receptor kinase-mediated immunity. Required for immunity mediated by the LRR receptor kinases XA21 and XA26/XA3 which recognize effectors from the bacterial pathogen Xanthomonas oryzae pv. oryzae (Xoo). Required for the immune response mediated by the LRR receptor kinase FLS2 which recognizes specifically the bacterial flagellin (flg22) effector. Kinase activity and direct interaction with the immune receptors is critical for their function. Involved in the regulation of plant growth through the brassinosteroid (BR) signaling pathway. The protein is LRR receptor kinase SERK2 of Oryza sativa subsp. japonica (Rice).